A 225-amino-acid chain; its full sequence is Methylthioribulose-1-phosphate dehydratase (225 aa).

2 residues coordinate Zn(2+): His-106 and His-108.

It belongs to the aldolase class II family. MtnB subfamily. The cofactor is Zn(2+).

It catalyses the reaction 5-(methylsulfanyl)-D-ribulose 1-phosphate = 5-methylsulfanyl-2,3-dioxopentyl phosphate + H2O. Its pathway is amino-acid biosynthesis; L-methionine biosynthesis via salvage pathway; L-methionine from S-methyl-5-thio-alpha-D-ribose 1-phosphate: step 2/6. Catalyzes the dehydration of methylthioribulose-1-phosphate (MTRu-1-P) into 2,3-diketo-5-methylthiopentyl-1-phosphate (DK-MTP-1-P). This chain is Methylthioribulose-1-phosphate dehydratase, found in Xanthomonas oryzae pv. oryzae (strain KACC10331 / KXO85).